The chain runs to 349 residues: Isopentenyl-diphosphate delta-isomerase (349 aa).

Residue 9–10 (RK) participates in substrate binding. Residues 65–67 (AMT), Ser95, and Asn124 each bind FMN. 95–97 (STH) contacts substrate. Residue Gln154 coordinates substrate. Glu155 contributes to the Mg(2+) binding site. FMN-binding positions include Lys186, Ser211, Thr216, 262–264 (GLR), and 283–284 (SR).

This sequence belongs to the IPP isomerase type 2 family. As to quaternary structure, homooctamer. Dimer of tetramers. FMN is required as a cofactor. Requires NADPH as cofactor. Mg(2+) serves as cofactor.

The protein localises to the cytoplasm. The catalysed reaction is isopentenyl diphosphate = dimethylallyl diphosphate. Its function is as follows. Involved in the biosynthesis of isoprenoids. Catalyzes the 1,3-allylic rearrangement of the homoallylic substrate isopentenyl (IPP) to its allylic isomer, dimethylallyl diphosphate (DMAPP). This chain is Isopentenyl-diphosphate delta-isomerase, found in Staphylococcus aureus (strain USA300 / TCH1516).